A 175-amino-acid chain; its full sequence is tRNA (cytidine(56)-2'-O)-methyltransferase (175 aa).

Leucine 82 contributes to the S-adenosyl-L-methionine binding site.

Belongs to the aTrm56 family. As to quaternary structure, homodimer.

It is found in the cytoplasm. It catalyses the reaction cytidine(56) in tRNA + S-adenosyl-L-methionine = 2'-O-methylcytidine(56) in tRNA + S-adenosyl-L-homocysteine + H(+). In terms of biological role, specifically catalyzes the AdoMet-dependent 2'-O-ribose methylation of cytidine at position 56 in tRNAs. The sequence is that of tRNA (cytidine(56)-2'-O)-methyltransferase from Cenarchaeum symbiosum (strain A).